Here is a 288-residue protein sequence, read N- to C-terminus: N(1)-aminopropylagmatine ureohydrolase (288 aa).

Mn(2+) is bound by residues H114, D133, H135, D137, D213, and D215.

The protein belongs to the arginase family. The cofactor is Mn(2+).

The protein resides in the cytoplasm. It carries out the reaction N(1)-(3-aminopropyl)agmatine + H2O = urea + spermidine. The catalysed reaction is agmatine + H2O = urea + putrescine. It functions in the pathway amine and polyamine biosynthesis; spermidine biosynthesis. Functionally, involved in the biosynthesis of polyamines which are thought to support the growth of thermophilic microorganisms under high-temperature conditions. It seems that long-chain and branched-chain of polyamines effectively stabilize DNA and RNA, respectively. Catalyzes the decarboxylation of N1-(3-aminopropyl)agmatine to yield spermidine and urea. It can also use agmatine to yield putrescine. The polypeptide is N(1)-aminopropylagmatine ureohydrolase (Thermococcus kodakarensis (strain ATCC BAA-918 / JCM 12380 / KOD1) (Pyrococcus kodakaraensis (strain KOD1))).